The following is a 363-amino-acid chain: Anthranilate phosphoribosyltransferase (363 aa).

Residues Gly85, Gly88–Asp89, Thr93, Asn95–Thr98, Lys113–Ser121, and Ala125 contribute to the 5-phospho-alpha-D-ribose 1-diphosphate site. Gly85 lines the anthranilate pocket. Ser97 serves as a coordination point for Mg(2+). Position 116 (Asn116) interacts with anthranilate. Arg171 is an anthranilate binding site. Mg(2+) contacts are provided by Asp233 and Glu234.

This sequence belongs to the anthranilate phosphoribosyltransferase family. In terms of assembly, homodimer. Requires Mg(2+) as cofactor.

The catalysed reaction is N-(5-phospho-beta-D-ribosyl)anthranilate + diphosphate = 5-phospho-alpha-D-ribose 1-diphosphate + anthranilate. It participates in amino-acid biosynthesis; L-tryptophan biosynthesis; L-tryptophan from chorismate: step 2/5. In terms of biological role, catalyzes the transfer of the phosphoribosyl group of 5-phosphorylribose-1-pyrophosphate (PRPP) to anthranilate to yield N-(5'-phosphoribosyl)-anthranilate (PRA). This Gluconobacter oxydans (strain 621H) (Gluconobacter suboxydans) protein is Anthranilate phosphoribosyltransferase.